Here is a 508-residue protein sequence, read N- to C-terminus: MKNTYYITTPIYYVNDVAHIGHAYTSVASDVIARFMRFCGKDVMFLTGTDEHGQKVEKAAINQNIDPQTFTDKTSQNFRDLMVAMNISNDDFIRTTENRHKKAVAVFWKKLLDNGAIYEGFYEGWYSVRDEAFYDESEINEDKLAPTGAPVEWVKEPSYFFNLAKWQDKLLEFYELNPDFVRPISRRNEVISFIKSGLKDLSISRTTFHWGIKVPNNRKHVIYVWLDALVNYISALGYPDKQSNYAKFWPANLQIVGKDILRFHAVYWPAFLMAAEIPLPKAIMVHGWWTNEGQKISKSLGNTIDPITLIDEFGVDQVRYFLMREVIFGADANFARNNLITRINSELSNKIGNLLHRIVSFVYKNNDAKVPLIKSGVIDKIYELPILKTAIKFAQENILLMDKTEINKILENIINLAEDANIYITNEAPWNLKTTDPDKMLEVLYSLLEVLRYIAIMLQPFVPNSANKMLDQLGVSKEERLFKHLVRDHALKAGSNILEPSIIFPKFN.

The 'HIGH' region motif lies at 12–22 (YYVNDVAHIGH). Residues 295–299 (KISKS) carry the 'KMSKS' region motif. Lys298 provides a ligand contact to ATP.

This sequence belongs to the class-I aminoacyl-tRNA synthetase family. MetG type 2B subfamily. In terms of assembly, monomer.

The protein resides in the cytoplasm. The catalysed reaction is tRNA(Met) + L-methionine + ATP = L-methionyl-tRNA(Met) + AMP + diphosphate. Functionally, is required not only for elongation of protein synthesis but also for the initiation of all mRNA translation through initiator tRNA(fMet) aminoacylation. This chain is Methionine--tRNA ligase (metG), found in Rickettsia prowazekii (strain Madrid E).